Reading from the N-terminus, the 30-residue chain is Hemocyanin subunit 2 (30 aa).

This sequence belongs to the tyrosinase family. Hemocyanin subfamily. In terms of tissue distribution, hemolymph.

It is found in the secreted. Its subcellular location is the extracellular space. Hemocyanins are copper-containing oxygen carriers occurring freely dissolved in the hemolymph of many mollusks and arthropods. In Homarus americanus (American lobster), this protein is Hemocyanin subunit 2.